The primary structure comprises 364 residues: Aromatic prenyltransferase (364 aa).

Positions 1–22 are cleaved as a signal peptide; it reads MDRNQWTLALMALMRFAHRAFI. N-linked (GlcNAc...) asparagine glycans are attached at residues Asn142 and Asn337.

This sequence belongs to the aromatic prenyltransferase family.

Prenyltransferase that attaches isoprenoid moieties to carbon atoms of aromatic substrates in an enzyme-catalyzed Friedel-Crafts reaction. This chain is Aromatic prenyltransferase, found in Talaromyces marneffei (strain ATCC 18224 / CBS 334.59 / QM 7333) (Penicillium marneffei).